Here is a 429-residue protein sequence, read N- to C-terminus: Adenylosuccinate synthetase (429 aa).

GTP is bound by residues 12–18 and 40–42; these read GDEGKGK and GHT. Asp-13 (proton acceptor) is an active-site residue. The Mg(2+) site is built by Asp-13 and Gly-40. Residues 13-16, 38-41, Thr-129, Arg-143, Gln-223, Thr-238, and Arg-302 contribute to the IMP site; these read DEGK and NAGH. His-41 (proton donor) is an active-site residue. A substrate-binding site is contributed by 298–304; the sequence is TVTGRKR. GTP contacts are provided by residues Arg-304, 330–332, and 412–414; these read KLD and STS.

Belongs to the adenylosuccinate synthetase family. In terms of assembly, homodimer. The cofactor is Mg(2+).

It localises to the cytoplasm. The enzyme catalyses IMP + L-aspartate + GTP = N(6)-(1,2-dicarboxyethyl)-AMP + GDP + phosphate + 2 H(+). It functions in the pathway purine metabolism; AMP biosynthesis via de novo pathway; AMP from IMP: step 1/2. Functionally, plays an important role in the de novo pathway of purine nucleotide biosynthesis. Catalyzes the first committed step in the biosynthesis of AMP from IMP. In Sphingopyxis alaskensis (strain DSM 13593 / LMG 18877 / RB2256) (Sphingomonas alaskensis), this protein is Adenylosuccinate synthetase.